Consider the following 222-residue polypeptide: MLDYRQRIDTLITKIEKARIAYSRHHIVKIVAVSKNASPEAIQHYYNCSQRAFGENKVQDLKIKMHSLEHLPLEWHMIGSLQENKINALLSLKPALLHSLDSLKLALKIEKRCEILGVNLNALLQVNSAYEESKSGVVPEEALETYSQISETCKRLKLKGLMCIGAHTDDETKIEKSFTTTKKLFDQIKNASVLSMGMSDDFELAIACGANLLRIGSFLFKE.

The residue at position 35 (lysine 35) is an N6-(pyridoxal phosphate)lysine.

Belongs to the pyridoxal phosphate-binding protein YggS/PROSC family.

Functionally, pyridoxal 5'-phosphate (PLP)-binding protein, which is involved in PLP homeostasis. The protein is Pyridoxal phosphate homeostasis protein of Helicobacter pylori (strain J99 / ATCC 700824) (Campylobacter pylori J99).